A 294-amino-acid polypeptide reads, in one-letter code: uncharacterized protein (294 aa).

This is an uncharacterized protein from Mycoplasma pneumoniae (strain ATCC 29342 / M129 / Subtype 1) (Mycoplasmoides pneumoniae).